The sequence spans 397 residues: Lysophospholipid transporter LplT (397 aa).

The Periplasmic segment spans residues 1 to 17 (MSESVHTNTSLWSKGMK). Residues 18 to 38 (AVIVAQFLSAFGDNALLFATL) form a helical membrane-spanning segment. At 39–52 (ALLKAQFYPEWSQP) the chain is on the cytoplasmic side. The helical transmembrane segment at 53 to 73 (ILQMVFVGAYILFAPFVGQVA) threads the bilayer. Residues 74–90 (DSFAKGRVMMFANGLKL) are Periplasmic-facing. A helical transmembrane segment spans residues 91-111 (LGAASICFGINPFLGYTLVGV). The Cytoplasmic segment spans residues 112 to 144 (GAAAYSPAKYGILGELTTGSKLVKANGLMEAST). The chain crosses the membrane as a helical span at residues 145–165 (IAAILLGSVAGGVLADWHILV). A topological domain (periplasmic) is located at residue A166. A helical transmembrane segment spans residues 167-187 (LAACALAYGGAVVANIYIPKL). At 188-226 (AAARPGQSWNLISMTRSFLNACTSLWRNGETRFSLVGTS) the chain is on the cytoplasmic side. Residues 227-247 (LFWGAGVTLRFLLVLWVPVAL) traverse the membrane as a helical segment. Topologically, residues 248–256 (GITDNATPT) are periplasmic. Residues 257-277 (YLNAMVAIGIVVGAGAAAKLV) form a helical membrane-spanning segment. Over 278-280 (TLE) the chain is Cytoplasmic. Residues 281–301 (TVSRCMPAGILIGVVVLIFSL) traverse the membrane as a helical segment. Topologically, residues 302-304 (QHE) are periplasmic. Residues 305 to 325 (LLPAYALLMLIGVLGGFFVVP) traverse the membrane as a helical segment. At 326–343 (LNALLQERGKKSVGAGNA) the chain is on the cytoplasmic side. A helical membrane pass occupies residues 344-364 (IAVQNLGENSAMLLMLGIYSL). At 365–366 (AV) the chain is on the periplasmic side. A helical transmembrane segment spans residues 367 to 387 (MVGIPVVPIGIGFGALFALAI). The Cytoplasmic segment spans residues 388 to 397 (TALWIWQRRH).

Belongs to the major facilitator superfamily. LplT (TC 2.A.1.42) family.

It localises to the cell inner membrane. Its function is as follows. Catalyzes the facilitated diffusion of 2-acyl-glycero-3-phosphoethanolamine (2-acyl-GPE) into the cell. The protein is Lysophospholipid transporter LplT of Escherichia coli O6:K15:H31 (strain 536 / UPEC).